A 257-amino-acid polypeptide reads, in one-letter code: Protein CUSTOS (257 aa).

Residues 1-11 show a composition bias toward low complexity; the sequence is MSDLESSSSSS. Residues 1–72 form a disordered region; sequence MSDLESSSSS…HEQDGNELQT (72 aa). Over residues 32 to 41 the composition is skewed to basic and acidic residues; sequence QRPRGPEKPG. S55 carries the post-translational modification Phosphoserine. Phosphothreonine is present on T73. 2 disordered regions span residues 120 to 157 and 170 to 257; these read FTSIPGGPEKEAAPQPCRKRLPSSSSSDDGDEELRRCR and SAIH…VPSN. Composition is skewed to basic residues over residues 180–190 and 227–237; these read KKKKRKLKKKA and TKKKKRKKKTK. Residues 228 to 236 carry the Nucleolar localization signal (NLS) motif; the sequence is KKKKRKKKT.

This sequence belongs to the CUSTOS family.

Its subcellular location is the nucleus envelope. In terms of biological role, plays a role in the regulation of Wnt signaling pathway during early development. The protein is Protein CUSTOS of Bos taurus (Bovine).